Here is a 246-residue protein sequence, read N- to C-terminus: Uridylate kinase (246 aa).

18-21 contacts ATP; it reads KLSG. Position 60 (G60) interacts with UMP. Residues G61 and R65 each coordinate ATP. UMP-binding positions include D80 and 141-148; that span reads TGNPFFTT. Residues T168, Y174, and D177 each coordinate ATP.

It belongs to the UMP kinase family. Homohexamer.

It is found in the cytoplasm. It carries out the reaction UMP + ATP = UDP + ADP. It functions in the pathway pyrimidine metabolism; CTP biosynthesis via de novo pathway; UDP from UMP (UMPK route): step 1/1. Inhibited by UTP. In terms of biological role, catalyzes the reversible phosphorylation of UMP to UDP. This chain is Uridylate kinase, found in Pseudomonas syringae pv. syringae (strain B728a).